Consider the following 293-residue polypeptide: tRNA pseudouridine synthase B (293 aa).

Aspartate 39 (nucleophile) is an active-site residue.

It belongs to the pseudouridine synthase TruB family. Type 1 subfamily.

It carries out the reaction uridine(55) in tRNA = pseudouridine(55) in tRNA. Functionally, responsible for synthesis of pseudouridine from uracil-55 in the psi GC loop of transfer RNAs. This chain is tRNA pseudouridine synthase B, found in Thermobifida fusca (strain YX).